A 382-amino-acid polypeptide reads, in one-letter code: Nitric oxide reductase FlRd-NAD(+) reductase (382 aa).

The protein belongs to the FAD-dependent oxidoreductase family. It depends on FAD as a cofactor.

It localises to the cytoplasm. It carries out the reaction 2 reduced [nitric oxide reductase rubredoxin domain] + NAD(+) + H(+) = 2 oxidized [nitric oxide reductase rubredoxin domain] + NADH. The protein operates within nitrogen metabolism; nitric oxide reduction. Its function is as follows. One of at least two accessory proteins for anaerobic nitric oxide (NO) reductase. Reduces the rubredoxin moiety of NO reductase. The chain is Nitric oxide reductase FlRd-NAD(+) reductase from Vibrio vulnificus (strain CMCP6).